The chain runs to 203 residues: MRRNWREHYNVFVANLALVLGFMLNIVVARYTLTGATPQARFLFLTPFLGIVAASIFYFFDVKWFLADYPYKKFHFQKKWTWTYLSGVFVFFANILVNVILLALLVNQMTNQILSEKYTGLLDNAYPLLWSAVGVSIFLSLISIGLSKTAHFKIDVEMLKAKKGEPTAADKTDSRPVVVDLDQTKSKKDGDNPPQASGDMTSL.

4 helical membrane-spanning segments follow: residues 9 to 29, 42 to 62, 86 to 106, and 126 to 146; these read YNVF…IVVA, FLFL…FFDV, SGVF…ALLV, and YPLL…SIGL. Composition is skewed to basic and acidic residues over residues 164–174 and 182–191; these read GEPTAADKTDS and DQTKSKKDGD. The segment at 164 to 203 is disordered; sequence GEPTAADKTDSRPVVVDLDQTKSKKDGDNPPQASGDMTSL. Residues 194–203 show a composition bias toward polar residues; the sequence is PQASGDMTSL.

The protein localises to the cell membrane. This is an uncharacterized protein from Mycoplasma pneumoniae (strain ATCC 29342 / M129 / Subtype 1) (Mycoplasmoides pneumoniae).